Reading from the N-terminus, the 192-residue chain is ATP synthase subunit b 2 (192 aa).

The chain crosses the membrane as a helical span at residues 39–59 (SGFLAQLIWLALAFGLLYYLM).

Belongs to the ATPase B chain family. In terms of assembly, F-type ATPases have 2 components, F(1) - the catalytic core - and F(0) - the membrane proton channel. F(1) has five subunits: alpha(3), beta(3), gamma(1), delta(1), epsilon(1). F(0) has three main subunits: a(1), b(2) and c(10-14). The alpha and beta chains form an alternating ring which encloses part of the gamma chain. F(1) is attached to F(0) by a central stalk formed by the gamma and epsilon chains, while a peripheral stalk is formed by the delta and b chains.

The protein resides in the cell inner membrane. In terms of biological role, f(1)F(0) ATP synthase produces ATP from ADP in the presence of a proton or sodium gradient. F-type ATPases consist of two structural domains, F(1) containing the extramembraneous catalytic core and F(0) containing the membrane proton channel, linked together by a central stalk and a peripheral stalk. During catalysis, ATP synthesis in the catalytic domain of F(1) is coupled via a rotary mechanism of the central stalk subunits to proton translocation. Component of the F(0) channel, it forms part of the peripheral stalk, linking F(1) to F(0). The b'-subunit is a diverged and duplicated form of b found in plants and photosynthetic bacteria. The polypeptide is ATP synthase subunit b 2 (atpF2) (Methylobacterium radiotolerans (strain ATCC 27329 / DSM 1819 / JCM 2831 / NBRC 15690 / NCIMB 10815 / 0-1)).